The chain runs to 448 residues: Exodeoxyribonuclease 7 large subunit (448 aa).

This sequence belongs to the XseA family. Heterooligomer composed of large and small subunits.

The protein localises to the cytoplasm. The enzyme catalyses Exonucleolytic cleavage in either 5'- to 3'- or 3'- to 5'-direction to yield nucleoside 5'-phosphates.. Functionally, bidirectionally degrades single-stranded DNA into large acid-insoluble oligonucleotides, which are then degraded further into small acid-soluble oligonucleotides. This is Exodeoxyribonuclease 7 large subunit from Shewanella baltica (strain OS223).